A 594-amino-acid polypeptide reads, in one-letter code: Laccase-2 (594 aa).

The N-terminal stretch at 1 to 20 (MGGIIKLSFLFCSLISLVNS) is a signal peptide. A glycan (N-linked (GlcNAc...) asparagine) is linked at Asn-67. 2 Plastocyanin-like domains span residues 70–183 (EALA…HSPN) and 195–357 (DRIV…RYTG). Residues His-117 and His-119 each contribute to the Cu cation site. A glycan (N-linked (GlcNAc...) asparagine) is linked at Asn-124. The cysteines at positions 138 and 578 are disulfide-linked. Positions 162 and 164 each coordinate Cu cation. Residues Asn-242, Asn-286, Asn-320, Asn-358, Asn-397, Asn-430, Asn-452, and Asn-458 are each glycosylated (N-linked (GlcNAc...) asparagine). Residues 466–563 (PVNIIINNLD…KMAVVVVQPE (98 aa)) form the Plastocyanin-like 3 domain. 3 residues coordinate Cu cation: His-480, His-483, and His-485. N-linked (GlcNAc...) asparagine glycosylation is present at Asn-508. Cu cation-binding residues include His-543, Cys-544, His-545, and His-549.

The protein belongs to the multicopper oxidase family. It depends on Cu cation as a cofactor.

The protein localises to the secreted. The protein resides in the cell wall. It carries out the reaction 4 hydroquinone + O2 = 4 benzosemiquinone + 2 H2O. Functionally, laccase that catalyzes the oxidation of certain aromatic compounds, including L-dopa, to quinones, which then polymerize to melanin. Able to oxidize a wide variety of aromatic diphenol and diamino groups in the ortho, meta, and para positions but not monophenolic groups such as in phenol, tyramine, or tyrosine. Plays an important role in virulence. Plays a role in dissemination to extrapulmonary sites but is not involved in pulmonary growth or in elicitation of cellular immune responses in the lung. The chain is Laccase-2 (LAC2) from Cryptococcus neoformans var. grubii serotype A (strain H99 / ATCC 208821 / CBS 10515 / FGSC 9487) (Filobasidiella neoformans var. grubii).